Reading from the N-terminus, the 173-residue chain is 16S rRNA aminocarboxypropyltransferase (173 aa).

Thr25, Leu72, Leu96, and Ser115 together coordinate S-adenosyl-L-methionine.

Belongs to the TDD superfamily. TSR3 family.

Its subcellular location is the cytoplasm. It catalyses the reaction an N(1)-methylpseudouridine in rRNA + S-adenosyl-L-methionine = N(1)-methyl-N(3)-[(3S)-3-amino-3-carboxypropyl]pseudouridine in rRNA + S-methyl-5'-thioadenosine + H(+). Its function is as follows. Aminocarboxypropyltransferase that catalyzes the aminocarboxypropyl transfer on pseudouridine corresponding to position 914 in M.jannaschii 16S rRNA. It constitutes the last step in biosynthesis of the hypermodified N1-methyl-N3-(3-amino-3-carboxypropyl) pseudouridine (m1acp3-Psi). The sequence is that of 16S rRNA aminocarboxypropyltransferase from Methanosarcina mazei (strain ATCC BAA-159 / DSM 3647 / Goe1 / Go1 / JCM 11833 / OCM 88) (Methanosarcina frisia).